The following is a 296-amino-acid chain: Cobalamin trafficking protein CblD (296 aa).

The N-terminal 38 residues, 1-38 (MANVLCNRARLVSYLPGFCSLVKRVVNPKAFSTAGSSG), are a transit peptide targeting the mitochondrion. Residue K203 is modified to N6-acetyllysine.

In terms of assembly, heterodimer with MMACHC. Forms a multiprotein complex with MMACHC, MTR and MTRR. Widely expressed at high levels.

The protein localises to the cytoplasm. The protein resides in the mitochondrion. Functionally, involved in cobalamin metabolism and trafficking. Plays a role in regulating the biosynthesis and the proportion of two coenzymes, methylcob(III)alamin (MeCbl) and 5'-deoxyadenosylcobalamin (AdoCbl). Promotes oxidation of cob(II)alamin bound to MMACHC. The processing of cobalamin in the cytosol occurs in a multiprotein complex composed of at least MMACHC, MMADHC, MTRR (methionine synthase reductase) and MTR (methionine synthase) which may contribute to shuttle safely and efficiently cobalamin towards MTR in order to produce methionine. The protein is Cobalamin trafficking protein CblD of Homo sapiens (Human).